Consider the following 142-residue polypeptide: Large ribosomal subunit protein uL13 (142 aa).

This sequence belongs to the universal ribosomal protein uL13 family. As to quaternary structure, part of the 50S ribosomal subunit.

This protein is one of the early assembly proteins of the 50S ribosomal subunit, although it is not seen to bind rRNA by itself. It is important during the early stages of 50S assembly. The protein is Large ribosomal subunit protein uL13 of Pyrococcus horikoshii (strain ATCC 700860 / DSM 12428 / JCM 9974 / NBRC 100139 / OT-3).